We begin with the raw amino-acid sequence, 512 residues long: UDP-N-acetylmuramate--L-alanine ligase (512 aa).

ATP is bound at residue 132–138 (GAHGKTT).

It belongs to the MurCDEF family.

The protein localises to the cytoplasm. It catalyses the reaction UDP-N-acetyl-alpha-D-muramate + L-alanine + ATP = UDP-N-acetyl-alpha-D-muramoyl-L-alanine + ADP + phosphate + H(+). It participates in cell wall biogenesis; peptidoglycan biosynthesis. Functionally, cell wall formation. The polypeptide is UDP-N-acetylmuramate--L-alanine ligase (Bifidobacterium longum (strain DJO10A)).